We begin with the raw amino-acid sequence, 419 residues long: L-rhamnose isomerase (419 aa).

Positions 262, 294, and 296 each coordinate Mn(2+).

The protein belongs to the rhamnose isomerase family. Homotetramer. Requires Mn(2+) as cofactor.

The protein resides in the cytoplasm. It carries out the reaction L-rhamnopyranose = L-rhamnulose. Its pathway is carbohydrate degradation; L-rhamnose degradation; glycerone phosphate from L-rhamnose: step 1/3. Catalyzes the interconversion of L-rhamnose and L-rhamnulose. The polypeptide is L-rhamnose isomerase (Escherichia coli O139:H28 (strain E24377A / ETEC)).